The chain runs to 339 residues: Ketol-acid reductoisomerase (NADP(+)) (339 aa).

One can recognise a KARI N-terminal Rossmann domain in the interval 1–182 (MRVYYDRDAD…GGGRAGIIET (182 aa)). NADP(+) is bound by residues 24-27 (YGSQ), arginine 48, serine 51, threonine 53, and 83-86 (DELQ). Residue histidine 108 is part of the active site. An NADP(+)-binding site is contributed by glycine 134. Residues 183–328 (SFKEECETDL…AKLREMMPWI (146 aa)) form the KARI C-terminal knotted domain. Aspartate 191, glutamate 195, glutamate 227, and glutamate 231 together coordinate Mg(2+). A substrate-binding site is contributed by serine 252.

It belongs to the ketol-acid reductoisomerase family. It depends on Mg(2+) as a cofactor.

The enzyme catalyses (2R)-2,3-dihydroxy-3-methylbutanoate + NADP(+) = (2S)-2-acetolactate + NADPH + H(+). It catalyses the reaction (2R,3R)-2,3-dihydroxy-3-methylpentanoate + NADP(+) = (S)-2-ethyl-2-hydroxy-3-oxobutanoate + NADPH + H(+). The protein operates within amino-acid biosynthesis; L-isoleucine biosynthesis; L-isoleucine from 2-oxobutanoate: step 2/4. It participates in amino-acid biosynthesis; L-valine biosynthesis; L-valine from pyruvate: step 2/4. Its function is as follows. Involved in the biosynthesis of branched-chain amino acids (BCAA). Catalyzes an alkyl-migration followed by a ketol-acid reduction of (S)-2-acetolactate (S2AL) to yield (R)-2,3-dihydroxy-isovalerate. In the isomerase reaction, S2AL is rearranged via a Mg-dependent methyl migration to produce 3-hydroxy-3-methyl-2-ketobutyrate (HMKB). In the reductase reaction, this 2-ketoacid undergoes a metal-dependent reduction by NADPH to yield (R)-2,3-dihydroxy-isovalerate. In Rhodopseudomonas palustris (strain BisB5), this protein is Ketol-acid reductoisomerase (NADP(+)).